The sequence spans 301 residues: GTPase Era (301 aa).

Residues 7–175 (YCGFIAIVGR…AAIVRKHLPE (169 aa)) enclose the Era-type G domain. A G1 region spans residues 15–22 (GRPNVGKS). 15 to 22 (GRPNVGKS) is a binding site for GTP. The interval 41-45 (QTTRH) is G2. A G3 region spans residues 62–65 (DTPG). GTP is bound by residues 62 to 66 (DTPGL) and 124 to 127 (NKVD). The G4 stretch occupies residues 124 to 127 (NKVD). Positions 154 to 156 (ISA) are G5. Positions 206-283 (LGAELPYSVT…HLELWVKVKS (78 aa)) constitute a KH type-2 domain.

This sequence belongs to the TRAFAC class TrmE-Era-EngA-EngB-Septin-like GTPase superfamily. Era GTPase family. As to quaternary structure, monomer.

Its subcellular location is the cytoplasm. It is found in the cell inner membrane. In terms of biological role, an essential GTPase that binds both GDP and GTP, with rapid nucleotide exchange. Plays a role in 16S rRNA processing and 30S ribosomal subunit biogenesis and possibly also in cell cycle regulation and energy metabolism. The chain is GTPase Era from Shigella flexneri.